A 432-amino-acid polypeptide reads, in one-letter code: MIMELFHTILAIVALILSSAVVSSAEISLASPRKLKLQSLANKGDVRPLQVLKLQEHPGRFITVVQILLNMVAILGGGIGESALSPYIADILNRSFEGSWIAPTASTIAFILVTCLFILFADLIPKRIAITYPEMVALSVVGIMNFSMYVFKPLVWFFDTIANVFFRLFRISTVREDGMTSEDIFAVVEAGAEAGVLKTQEHYLIENIFDMQARTVTSTMTTRENIVYLDRTFSRQEVMDTLSRDSHSKIVICDNGLDKILGYIESHTLLTMYLQNENVVLTDPKLLRKALFVPDTLSLYEVLELFKSTGEDFAIIVNEYALVVGIVTLNDVMSIVMGELVSNEEEYIVSRDENSWLIDGATPLEEVTRVLDIAYFPDEENYETISGFMMYMLRKIPKKTDSVVYGKYKFEVIDTENFKIDQILVSLVKEQE.

One can recognise a CNNM transmembrane domain in the interval 1 to 201; the sequence is MIMELFHTIL…AEAGVLKTQE (201 aa). 4 helical membrane passes run 2-22, 61-81, 100-120, and 138-158; these read IMELFHTILAIVALILSSAVV, FITVVQILLNMVAILGGGIGE, WIAPTASTIAFILVTCLFILF, and LSVVGIMNFSMYVFKPLVWFF. 2 CBS domains span residues 220–279 and 286–345; these read MTTR…NENV and LLRK…SNEE.

This sequence belongs to the UPF0053 family. PaeA subfamily.

It is found in the cell inner membrane. Functionally, involved in cadaverine and putrescine tolerance in stationary phase. May facilitate the efflux of both cadaverine and putrescine from the cytoplasm, reducing potentially toxic levels under certain stress conditions. In Haemophilus influenzae (strain ATCC 51907 / DSM 11121 / KW20 / Rd), this protein is Polyamine export protein.